Here is a 241-residue protein sequence, read N- to C-terminus: MKLAFLCILSTLLRTFAYNPDHIAGTTPPYLVYLKSDYLPCTGVLIHPLWVITAAHCNLPNLQVILGITNPADPMERDVEVSDYEKIFHHPNFLVSSISHDLLLIKLKRRIKHSNYAKAVKLPQHIVSVNAMCSVSTWAYNLCDVTKDPDSLQTVNVTVISKAECRNAYKAFDITENMICVGIVPGRRLPCKEVTAAPAVCNGVLYGILSYADGCVLRADVGIYASIFHYLPWIEDTMKNN.

A signal peptide spans 1–17; sequence MKLAFLCILSTLLRTFA. A Peptidase S1 domain is found at 18–239; sequence YNPDHIAGTT…YLPWIEDTMK (222 aa). Cysteine 41 and cysteine 57 are joined by a disulfide. Active-site charge relay system residues include histidine 56 and aspartate 101. Cystine bridges form between cysteine 133/cysteine 201, cysteine 165/cysteine 180, and cysteine 191/cysteine 215. Residue asparagine 156 is glycosylated (N-linked (GlcNAc...) asparagine).

This sequence belongs to the peptidase S1 family.

The protein localises to the secreted. It catalyses the reaction Preferential cleavage: Arg-|-Xaa, Lys-|-Xaa.. This is Putative inactive serine protease 58 (Prss58) from Mus musculus (Mouse).